A 214-amino-acid chain; its full sequence is Pyridoxine/pyridoxamine 5'-phosphate oxidase (214 aa).

Substrate contacts are provided by residues 9 to 12 (RKDY) and lysine 67. FMN is bound by residues 62–67 (RMVLLK), 77–78 (FT), arginine 83, lysine 84, and glutamine 106. The substrate site is built by tyrosine 124, arginine 128, and serine 132. FMN contacts are provided by residues 141–142 (QS) and tryptophan 186. Residue 192–194 (RLH) coordinates substrate. Residue arginine 196 coordinates FMN.

It belongs to the pyridoxamine 5'-phosphate oxidase family. In terms of assembly, homodimer. It depends on FMN as a cofactor.

It catalyses the reaction pyridoxamine 5'-phosphate + O2 + H2O = pyridoxal 5'-phosphate + H2O2 + NH4(+). It carries out the reaction pyridoxine 5'-phosphate + O2 = pyridoxal 5'-phosphate + H2O2. It participates in cofactor metabolism; pyridoxal 5'-phosphate salvage; pyridoxal 5'-phosphate from pyridoxamine 5'-phosphate: step 1/1. It functions in the pathway cofactor metabolism; pyridoxal 5'-phosphate salvage; pyridoxal 5'-phosphate from pyridoxine 5'-phosphate: step 1/1. In terms of biological role, catalyzes the oxidation of either pyridoxine 5'-phosphate (PNP) or pyridoxamine 5'-phosphate (PMP) into pyridoxal 5'-phosphate (PLP). This is Pyridoxine/pyridoxamine 5'-phosphate oxidase from Nostoc punctiforme (strain ATCC 29133 / PCC 73102).